Here is a 167-residue protein sequence, read N- to C-terminus: Phosphopantetheine adenylyltransferase (167 aa).

Threonine 9 lines the substrate pocket. ATP contacts are provided by residues 9 to 10 (TF) and histidine 17. Residues lysine 41, leucine 73, and arginine 87 each contribute to the substrate site. Residues 88–90 (GLR), glutamate 98, and 123–129 (NSYISST) contribute to the ATP site.

Belongs to the bacterial CoaD family. Homohexamer. Mg(2+) is required as a cofactor.

The protein localises to the cytoplasm. The enzyme catalyses (R)-4'-phosphopantetheine + ATP + H(+) = 3'-dephospho-CoA + diphosphate. It participates in cofactor biosynthesis; coenzyme A biosynthesis; CoA from (R)-pantothenate: step 4/5. Functionally, reversibly transfers an adenylyl group from ATP to 4'-phosphopantetheine, yielding dephospho-CoA (dPCoA) and pyrophosphate. This Chromohalobacter salexigens (strain ATCC BAA-138 / DSM 3043 / CIP 106854 / NCIMB 13768 / 1H11) protein is Phosphopantetheine adenylyltransferase.